The following is a 272-amino-acid chain: Ribosomal RNA small subunit methyltransferase A (272 aa).

S-adenosyl-L-methionine is bound by residues asparagine 27, leucine 29, glycine 54, glutamate 75, aspartate 97, and asparagine 117.

This sequence belongs to the class I-like SAM-binding methyltransferase superfamily. rRNA adenine N(6)-methyltransferase family. RsmA subfamily.

The protein localises to the cytoplasm. The enzyme catalyses adenosine(1518)/adenosine(1519) in 16S rRNA + 4 S-adenosyl-L-methionine = N(6)-dimethyladenosine(1518)/N(6)-dimethyladenosine(1519) in 16S rRNA + 4 S-adenosyl-L-homocysteine + 4 H(+). Specifically dimethylates two adjacent adenosines (A1518 and A1519) in the loop of a conserved hairpin near the 3'-end of 16S rRNA in the 30S particle. May play a critical role in biogenesis of 30S subunits. In Malacoplasma penetrans (strain HF-2) (Mycoplasma penetrans), this protein is Ribosomal RNA small subunit methyltransferase A.